The following is a 235-amino-acid chain: Secretory carrier-associated membrane protein 5 (235 aa).

Over 1-39 (MAEKVNNFPPLPKFIPLKPCFYQDFEADIPPQHVSMTKR) the chain is Cytoplasmic. A helical transmembrane segment spans residues 40–60 (LYYLWMLNSVTLAVNLVGCLA). At 61–67 (WLIGGGG) the chain is on the extracellular side. Residues 68-88 (ATNFGLAFLWLILFTPCSYVC) form a helical membrane-spanning segment. Residues 89 to 102 (WFRPIYKAFKTDSS) lie on the Cytoplasmic side of the membrane. A helical transmembrane segment spans residues 103–125 (FSFMAFFFTFMAQLVISIIQAVG). Over 126-148 (IPGWGVCGWIATISFFGTNIGSA) the chain is Extracellular. Residues 149 to 169 (VVMLIPTVMFTVMAVFSFIAL) traverse the membrane as a helical segment. The Cytoplasmic portion of the chain corresponds to 170 to 235 (SMVHKFYRGS…TPNYTYSNEM (66 aa)).

Belongs to the SCAMP family. SCAMP5 subfamily. As to quaternary structure, interacts (via C-terminal part) with SYT1 and SYT2; interaction with synaptotagmins making a link with the SNARE molecules. Interacts with SLC9A7. As to expression, expressed both by neuronal and non-neuronal tissues. Expressed in brain, stomach, thyroid, spinal cord, lymph node, trachea, adrenal gland, bone marrow and in the different parts of brain. In thyroid tissues, it is expressed by the follicular epithelial cells. In the adrenal gland tissues it is detected in the zona fasciculata of the cortex region (at protein level).

Its subcellular location is the cell membrane. The protein localises to the golgi apparatus membrane. It localises to the golgi apparatus. The protein resides in the trans-Golgi network membrane. It is found in the recycling endosome membrane. Its subcellular location is the cytoplasmic vesicle. The protein localises to the secretory vesicle. It localises to the synaptic vesicle membrane. Its function is as follows. Required for the calcium-dependent exocytosis of signal sequence-containing cytokines such as CCL5. Probably acts in cooperation with the SNARE machinery. May play a role in accumulation of expanded polyglutamine (polyQ) protein huntingtin (HTT) in case of endoplasmic reticulum stress by inhibiting the endocytosis pathway. In Homo sapiens (Human), this protein is Secretory carrier-associated membrane protein 5 (SCAMP5).